The chain runs to 328 residues: 4-hydroxy-3-methylbut-2-enyl diphosphate reductase (328 aa).

Residue cysteine 24 coordinates [4Fe-4S] cluster. Residues histidine 55 and histidine 88 each coordinate (2E)-4-hydroxy-3-methylbut-2-enyl diphosphate. Dimethylallyl diphosphate is bound by residues histidine 55 and histidine 88. The isopentenyl diphosphate site is built by histidine 55 and histidine 88. [4Fe-4S] cluster is bound at residue cysteine 110. Histidine 138 contributes to the (2E)-4-hydroxy-3-methylbut-2-enyl diphosphate binding site. Histidine 138 is a binding site for dimethylallyl diphosphate. Isopentenyl diphosphate is bound at residue histidine 138. The active-site Proton donor is glutamate 140. Threonine 178 lines the (2E)-4-hydroxy-3-methylbut-2-enyl diphosphate pocket. Residue cysteine 208 coordinates [4Fe-4S] cluster. Residues serine 236, serine 237, asparagine 238, and serine 279 each contribute to the (2E)-4-hydroxy-3-methylbut-2-enyl diphosphate site. Positions 236, 237, 238, and 279 each coordinate dimethylallyl diphosphate. The isopentenyl diphosphate site is built by serine 236, serine 237, asparagine 238, and serine 279.

The protein belongs to the IspH family. [4Fe-4S] cluster serves as cofactor.

The enzyme catalyses isopentenyl diphosphate + 2 oxidized [2Fe-2S]-[ferredoxin] + H2O = (2E)-4-hydroxy-3-methylbut-2-enyl diphosphate + 2 reduced [2Fe-2S]-[ferredoxin] + 2 H(+). The catalysed reaction is dimethylallyl diphosphate + 2 oxidized [2Fe-2S]-[ferredoxin] + H2O = (2E)-4-hydroxy-3-methylbut-2-enyl diphosphate + 2 reduced [2Fe-2S]-[ferredoxin] + 2 H(+). The protein operates within isoprenoid biosynthesis; dimethylallyl diphosphate biosynthesis; dimethylallyl diphosphate from (2E)-4-hydroxy-3-methylbutenyl diphosphate: step 1/1. It participates in isoprenoid biosynthesis; isopentenyl diphosphate biosynthesis via DXP pathway; isopentenyl diphosphate from 1-deoxy-D-xylulose 5-phosphate: step 6/6. In terms of biological role, catalyzes the conversion of 1-hydroxy-2-methyl-2-(E)-butenyl 4-diphosphate (HMBPP) into a mixture of isopentenyl diphosphate (IPP) and dimethylallyl diphosphate (DMAPP). Acts in the terminal step of the DOXP/MEP pathway for isoprenoid precursor biosynthesis. This Ehrlichia ruminantium (strain Gardel) protein is 4-hydroxy-3-methylbut-2-enyl diphosphate reductase.